The following is a 152-amino-acid chain: B3 domain-containing protein At1g10455 (152 aa).

The TF-B3 DNA-binding region spans 24–131; that stretch reads LKKKLSDSDL…EVKFKHFKSQ (108 aa).

It localises to the nucleus. The protein is B3 domain-containing protein At1g10455 of Arabidopsis thaliana (Mouse-ear cress).